Reading from the N-terminus, the 476-residue chain is Bifunctional protein HldE (476 aa).

Positions 1 to 319 (MKISLPAFEK…AALNLSHGES (319 aa)) are ribokinase. Position 195 to 198 (195 to 198 (NMSE)) interacts with ATP. Aspartate 264 is an active-site residue. The cytidylyltransferase stretch occupies residues 345-476 (MTNGCFDILH…AIIENIMAKQ (132 aa)).

In the N-terminal section; belongs to the carbohydrate kinase PfkB family. It in the C-terminal section; belongs to the cytidylyltransferase family. As to quaternary structure, homodimer.

The catalysed reaction is D-glycero-beta-D-manno-heptose 7-phosphate + ATP = D-glycero-beta-D-manno-heptose 1,7-bisphosphate + ADP + H(+). The enzyme catalyses D-glycero-beta-D-manno-heptose 1-phosphate + ATP + H(+) = ADP-D-glycero-beta-D-manno-heptose + diphosphate. The protein operates within nucleotide-sugar biosynthesis; ADP-L-glycero-beta-D-manno-heptose biosynthesis; ADP-L-glycero-beta-D-manno-heptose from D-glycero-beta-D-manno-heptose 7-phosphate: step 1/4. Its pathway is nucleotide-sugar biosynthesis; ADP-L-glycero-beta-D-manno-heptose biosynthesis; ADP-L-glycero-beta-D-manno-heptose from D-glycero-beta-D-manno-heptose 7-phosphate: step 3/4. In terms of biological role, catalyzes the phosphorylation of D-glycero-D-manno-heptose 7-phosphate at the C-1 position to selectively form D-glycero-beta-D-manno-heptose-1,7-bisphosphate. Its function is as follows. Catalyzes the ADP transfer from ATP to D-glycero-beta-D-manno-heptose 1-phosphate, yielding ADP-D-glycero-beta-D-manno-heptose. The chain is Bifunctional protein HldE from Shewanella loihica (strain ATCC BAA-1088 / PV-4).